The sequence spans 472 residues: Regulator of G-protein signaling 6 (472 aa).

The 76-residue stretch at K40–A115 folds into the DEP domain. The region spanning I261–V330 is the G protein gamma domain. One can recognise an RGS domain in the interval S336–F441.

As to quaternary structure, interacts with GNB5. Interacts with RGS7BP, leading to regulate the subcellular location of the heterodimer formed with GNB5. Interacts with GNAI1.

The protein localises to the cytoplasm. Its subcellular location is the cytosol. It localises to the membrane. The protein resides in the nucleus. It is found in the cell membrane. In terms of biological role, regulates G protein-coupled receptor signaling cascades. Inhibits signal transduction by increasing the GTPase activity of G protein alpha subunits, thereby driving them into their inactive GDP-bound form. The RGS6/GNB5 dimer enhances GNAO1 GTPase activity. The sequence is that of Regulator of G-protein signaling 6 (RGS6) from Homo sapiens (Human).